Consider the following 755-residue polypeptide: Tryptophan 2-monooxygenase (755 aa).

FMN contacts are provided by serine 247, glutamate 267, lysine 275, and arginine 295. Residue arginine 295 participates in substrate binding.

The protein belongs to the tryptophan 2-monooxygenase family. Requires FMN as cofactor.

The enzyme catalyses L-tryptophan + O2 = indole-3-acetamide + CO2 + H2O. It participates in plant hormone metabolism; auxin biosynthesis. The sequence is that of Tryptophan 2-monooxygenase (tms1) from Agrobacterium tumefaciens (strain Ach5).